The sequence spans 434 residues: Asparagine--tRNA ligase (434 aa).

This sequence belongs to the class-II aminoacyl-tRNA synthetase family.

It is found in the cytoplasm. It catalyses the reaction tRNA(Asn) + L-asparagine + ATP = L-asparaginyl-tRNA(Asn) + AMP + diphosphate + H(+). The polypeptide is Asparagine--tRNA ligase (Pyrococcus abyssi (strain GE5 / Orsay)).